A 152-amino-acid chain; its full sequence is MAEVEPDVSAAALAKKRTFKKFSFKGVDLDALLDMPTDDLVELFPSRIRRRMSRGLTRKPMALIKKLRKAKLDAPAGEKPEVVRTHLRNMVIMPEMIGSIIGVYNGKTFNQIEIKPEMIGHYLAEFSITYKPVRHGKPGHGATHSSRFIPLK.

It belongs to the universal ribosomal protein uS19 family.

Its subcellular location is the cytoplasm. In Arabidopsis thaliana (Mouse-ear cress), this protein is Small ribosomal subunit protein uS19z (RPS15B).